A 114-amino-acid chain; its full sequence is T cell receptor beta variable 6-4 (114 aa).

Positions 1–21 are cleaved as a signal peptide; that stretch reads MSIRLLCCVAFSLLWAGPVTA. In terms of domain architecture, Ig-like spans 22 to 114; that stretch reads GITQAPTSQI…TSVYFCASSD (93 aa). An intrachain disulfide couples C42 to C110.

In terms of assembly, alpha-beta TR is a heterodimer composed of an alpha and beta chain; disulfide-linked. The alpha-beta TR is associated with the transmembrane signaling CD3 coreceptor proteins to form the TR-CD3 (TcR or TCR). The assembly of alpha-beta TR heterodimers with CD3 occurs in the endoplasmic reticulum where a single alpha-beta TR heterodimer associates with one CD3D-CD3E heterodimer, one CD3G-CD3E heterodimer and one CD247 homodimer forming a stable octameric structure. CD3D-CD3E and CD3G-CD3E heterodimers preferentially associate with TR alpha and TR beta chains, respectively. The association of the CD247 homodimer is the last step of TcR assembly in the endoplasmic reticulum and is required for transport to the cell surface.

Its subcellular location is the cell membrane. V region of the variable domain of T cell receptor (TR) beta chain that participates in the antigen recognition. Alpha-beta T cell receptors are antigen specific receptors which are essential to the immune response and are present on the cell surface of T lymphocytes. Recognize peptide-major histocompatibility (MH) (pMH) complexes that are displayed by antigen presenting cells (APC), a prerequisite for efficient T cell adaptive immunity against pathogens. Binding of alpha-beta TR to pMH complex initiates TR-CD3 clustering on the cell surface and intracellular activation of LCK that phosphorylates the ITAM motifs of CD3G, CD3D, CD3E and CD247 enabling the recruitment of ZAP70. In turn ZAP70 phosphorylates LAT, which recruits numerous signaling molecules to form the LAT signalosome. The LAT signalosome propagates signal branching to three major signaling pathways, the calcium, the mitogen-activated protein kinase (MAPK) kinase and the nuclear factor NF-kappa-B (NF-kB) pathways, leading to the mobilization of transcription factors that are critical for gene expression and essential for T cell growth and differentiation. The T cell repertoire is generated in the thymus, by V-(D)-J rearrangement. This repertoire is then shaped by intrathymic selection events to generate a peripheral T cell pool of self-MH restricted, non-autoaggressive T cells. Post-thymic interaction of alpha-beta TR with the pMH complexes shapes TR structural and functional avidity. The sequence is that of T cell receptor beta variable 6-4 from Homo sapiens (Human).